Here is a 239-residue protein sequence, read N- to C-terminus: Ribose-5-phosphate isomerase A (239 aa).

Substrate contacts are provided by residues 40-43 (SGST), 96-99 (DGAD), and 110-113 (KGGG). Catalysis depends on E119, which acts as the Proton acceptor. K137 is a binding site for substrate.

It belongs to the ribose 5-phosphate isomerase family. In terms of assembly, homodimer.

It carries out the reaction aldehydo-D-ribose 5-phosphate = D-ribulose 5-phosphate. It functions in the pathway carbohydrate degradation; pentose phosphate pathway; D-ribose 5-phosphate from D-ribulose 5-phosphate (non-oxidative stage): step 1/1. Functionally, catalyzes the reversible conversion of ribose-5-phosphate to ribulose 5-phosphate. This chain is Ribose-5-phosphate isomerase A, found in Methanococcus maripaludis (strain C6 / ATCC BAA-1332).